The sequence spans 171 residues: Ribosome maturation factor RimM (171 aa).

Residues 96-168 (EDGFYDHELE…TATITPPEGL (73 aa)) enclose the PRC barrel domain.

It belongs to the RimM family. As to quaternary structure, binds ribosomal protein uS19.

It is found in the cytoplasm. In terms of biological role, an accessory protein needed during the final step in the assembly of 30S ribosomal subunit, possibly for assembly of the head region. Essential for efficient processing of 16S rRNA. May be needed both before and after RbfA during the maturation of 16S rRNA. It has affinity for free ribosomal 30S subunits but not for 70S ribosomes. The chain is Ribosome maturation factor RimM from Corynebacterium glutamicum (strain R).